A 246-amino-acid chain; its full sequence is Exosome complex component Rrp41 (246 aa).

Belongs to the RNase PH family. Rrp41 subfamily. As to quaternary structure, component of the archaeal exosome complex. Forms a hexameric ring-like arrangement composed of 3 Rrp41-Rrp42 heterodimers. The hexameric ring associates with a trimer of Rrp4 and/or Csl4 subunits.

The protein resides in the cytoplasm. Catalytic component of the exosome, which is a complex involved in RNA degradation. Has 3'-&gt;5' exoribonuclease activity. Can also synthesize heteromeric RNA-tails. The sequence is that of Exosome complex component Rrp41 from Pyrobaculum aerophilum (strain ATCC 51768 / DSM 7523 / JCM 9630 / CIP 104966 / NBRC 100827 / IM2).